A 131-amino-acid polypeptide reads, in one-letter code: Arsenate reductase (131 aa).

Catalysis depends on nucleophile residues cysteine 10, cysteine 82, and cysteine 89. Intrachain disulfides connect cysteine 10–cysteine 82 and cysteine 82–cysteine 89.

It belongs to the low molecular weight phosphotyrosine protein phosphatase family. Thioredoxin-coupled ArsC subfamily.

The protein localises to the cytoplasm. The catalysed reaction is arsenate + [thioredoxin]-dithiol + H(+) = arsenite + [thioredoxin]-disulfide + H2O. Functionally, catalyzes the reduction of arsenate [As(V)] to arsenite [As(III)]. This chain is Arsenate reductase, found in Staphylococcus aureus (strain COL).